We begin with the raw amino-acid sequence, 231 residues long: Somatolactin-2 (231 aa).

The N-terminal stretch at 1-24 (MRMMRAIKQGQWAILLWPYLLTTS) is a signal peptide. Cystine bridges form between C29–C39, C89–C205, and C222–C230. N-linked (GlcNAc...) asparagine glycosylation is present at N145.

The protein belongs to the somatotropin/prolactin family. In terms of tissue distribution, pituitary gland.

The protein resides in the secreted. The sequence is that of Somatolactin-2 from Sparus aurata (Gilthead sea bream).